A 2275-amino-acid chain; its full sequence is Multifunctional protein pyrABCN (2275 aa).

Residues 1–440 (MPETVGHEEP…PGPRDTEYLF (440 aa)) form a GATase (Glutamine amidotransferase) region. L-glutamine is bound by residues Ser102, Gly313, and Gly315. Residues 265-453 (RVLCLDVGLK…INAIKDTIAS (189 aa)) form the Glutamine amidotransferase type-1 domain. The active-site Nucleophile; for GATase activity is the Cys342. 5 residues coordinate L-glutamine: Leu343, Gln346, Asn384, Gly386, and Tyr387. Residues His426 and Glu428 each act as for GATase activity in the active site. The segment at 441–482 (DVFINAIKDTIASPEALQKPVNFPGGAVAENIKASPRVSVKK) is linker. Residues 483–1522 (VLILGSGGLS…TNVKNAKILI (1040 aa)) form a CPSase (Carbamoyl-phosphate synthase) region. ATP-binding residues include Arg600, Arg640, Gly646, Gly647, Arg677, Met679, Glu684, Gly710, Ile711, His712, Gln753, and Glu767. ATP-grasp domains are found at residues 604-796 (ARSM…KLGL) and 1139-1330 (SRML…KAMI). 3 residues coordinate Mg(2+): Gln753, Glu767, and Asn769. Mn(2+) contacts are provided by Gln753, Glu767, and Asn769. Residues Arg1175, Lys1214, Ile1216, Glu1221, Gly1246, Val1247, His1248, Ser1249, Gln1289, and Glu1301 each coordinate ATP. Mg(2+) contacts are provided by Gln1289, Glu1301, and Asn1303. Gln1289, Glu1301, and Asn1303 together coordinate Mn(2+). One can recognise an MGS-like domain in the interval 1396 to 1575 (FKLPKRNILL…KDFEAVTKAS (180 aa)). Residues 1523 to 1532 (EAIARHYALN) are linker. Residues 1533–1862 (VQTIDYQTSH…FQGKTSCLDS (330 aa)) form a defective DHOase domain region. Residues 1863–1882 (EITPDAPKGSDMSGHRIVPA) are disordered. A linker region spans residues 1863–1953 (EITPDAPKGS…LQMLSRSPFK (91 aa)). The interval 1954–2258 (QKHVLSVNQF…EFDMLMWMQM (305 aa)) is ATCase (Aspartate transcarbamylase). Carbamoyl phosphate contacts are provided by Arg2006 and Thr2007. Position 2034 (Lys2034) interacts with L-aspartate. Positions 2055, 2083, and 2086 each coordinate carbamoyl phosphate. Positions 2116 and 2178 each coordinate L-aspartate. 2 residues coordinate carbamoyl phosphate: Leu2217 and Pro2218.

The protein in the central section; belongs to the metallo-dependent hydrolases superfamily. DHOase family. CAD subfamily. It in the N-terminal section; belongs to the CarA family. In the 2nd section; belongs to the CarB family. This sequence in the 3rd section; belongs to the metallo-dependent hydrolases superfamily. DHOase family. CAD subfamily. The protein in the C-terminal section; belongs to the aspartate/ornithine carbamoyltransferase superfamily. ATCase family. It depends on Mg(2+) as a cofactor. The cofactor is Mn(2+).

The enzyme catalyses hydrogencarbonate + L-glutamine + 2 ATP + H2O = carbamoyl phosphate + L-glutamate + 2 ADP + phosphate + 2 H(+). It catalyses the reaction L-glutamine + H2O = L-glutamate + NH4(+). It carries out the reaction hydrogencarbonate + NH4(+) + 2 ATP = carbamoyl phosphate + 2 ADP + phosphate + 2 H(+). The catalysed reaction is carbamoyl phosphate + L-aspartate = N-carbamoyl-L-aspartate + phosphate + H(+). The protein operates within pyrimidine metabolism; UMP biosynthesis via de novo pathway; (S)-dihydroorotate from bicarbonate: step 1/3. It functions in the pathway pyrimidine metabolism; UMP biosynthesis via de novo pathway; (S)-dihydroorotate from bicarbonate: step 2/3. Its function is as follows. Multifunctional protein that encodes the first 2 enzymatic activities of the de novo pyrimidine pathway: carbamoylphosphate synthetase (CPSase; EC 6.3.5.5) and aspartate transcarbamylase (ATCase; EC 2.1.3.2). The CPSase-function is accomplished in 2 steps, by a glutamine-dependent amidotransferase activity (GATase) that binds and cleaves glutamine to produce ammonia, followed by an ammonium-dependent carbamoyl phosphate synthetase, which reacts with the ammonia, hydrogencarbonate and ATP to form carbamoyl phosphate. The endogenously produced carbamoyl phosphate is sequestered and channeled to the ATCase active site. ATCase then catalyzes the formation of carbamoyl-L-aspartate from L-aspartate and carbamoyl phosphate. In Emericella nidulans (strain FGSC A4 / ATCC 38163 / CBS 112.46 / NRRL 194 / M139) (Aspergillus nidulans), this protein is Multifunctional protein pyrABCN.